The following is a 212-amino-acid chain: 3-isopropylmalate dehydratase small subunit (212 aa).

The protein belongs to the LeuD family. LeuD type 1 subfamily. In terms of assembly, heterodimer of LeuC and LeuD.

The catalysed reaction is (2R,3S)-3-isopropylmalate = (2S)-2-isopropylmalate. The protein operates within amino-acid biosynthesis; L-leucine biosynthesis; L-leucine from 3-methyl-2-oxobutanoate: step 2/4. Its function is as follows. Catalyzes the isomerization between 2-isopropylmalate and 3-isopropylmalate, via the formation of 2-isopropylmaleate. This is 3-isopropylmalate dehydratase small subunit from Laribacter hongkongensis (strain HLHK9).